Consider the following 387-residue polypeptide: MTTFQTAPVTLPTPLGGSLVRRIWRPGQDFDPAELAGRPRLELSSRSLADLEMIATGAYSPLTGFVGEADYLSIIEHLRLADGTPWSLPITLPVTAEQAAGLSGRVVLTHGGEPVGTLDIEEKYAAQKSLEAREVYRTEEEAHPGVAALYAQGDVYLAGPVTLFEVPRGEFPRAHRTPAEVREVIEARGWRSTVAFQTRNPIHRAHEYLQKVALELVDGLLLHPLVGQTKGDDVPAETRMEAYEVLLRGYYPQERTLLSVYPAAMRYAGPREAIVHALSRRNYGATHFIVGRDHAGVGSYYGTYDAQEIFNTYTAEELGIRILKFEHTFYCQSCGQLVSPRTCPHDSSHHLVLSGTKVREKLRAGENLPPEFTRPEVAEVLRKAYTR.

This sequence belongs to the sulfate adenylyltransferase family.

It catalyses the reaction sulfate + ATP + H(+) = adenosine 5'-phosphosulfate + diphosphate. It functions in the pathway sulfur metabolism; hydrogen sulfide biosynthesis; sulfite from sulfate: step 1/3. This Deinococcus radiodurans (strain ATCC 13939 / DSM 20539 / JCM 16871 / CCUG 27074 / LMG 4051 / NBRC 15346 / NCIMB 9279 / VKM B-1422 / R1) protein is Sulfate adenylyltransferase (sat).